The sequence spans 318 residues: Methionyl-tRNA formyltransferase (318 aa).

Serine 114–proline 117 is a (6S)-5,6,7,8-tetrahydrofolate binding site.

It belongs to the Fmt family.

It carries out the reaction L-methionyl-tRNA(fMet) + (6R)-10-formyltetrahydrofolate = N-formyl-L-methionyl-tRNA(fMet) + (6S)-5,6,7,8-tetrahydrofolate + H(+). In terms of biological role, attaches a formyl group to the free amino group of methionyl-tRNA(fMet). The formyl group appears to play a dual role in the initiator identity of N-formylmethionyl-tRNA by promoting its recognition by IF2 and preventing the misappropriation of this tRNA by the elongation apparatus. The polypeptide is Methionyl-tRNA formyltransferase (Protochlamydia amoebophila (strain UWE25)).